A 223-amino-acid polypeptide reads, in one-letter code: Protein phosphatase 1 regulatory subunit 3C (223 aa).

A CBM21 domain is found at 104–209 (REQLTRKLVC…NNDGKNYSLH (106 aa)).

Interacts with PPP1CC catalytic subunit of PP1 and associates with glycogen. Forms complexes with glycogen phosphorylase, glycogen synthase and phosphorylase kinase which is necessary for its regulation of PP1 activity.

In terms of biological role, acts as a glycogen-targeting subunit for PP1 and regulates its activity. Activates glycogen synthase, reduces glycogen phosphorylase activity and limits glycogen breakdown. In Xenopus tropicalis (Western clawed frog), this protein is Protein phosphatase 1 regulatory subunit 3C.